Here is a 206-residue protein sequence, read N- to C-terminus: Isochorismatase domain-containing protein 2A (206 aa).

Lys26 is modified (N6-succinyllysine). Residues Lys93 and Lys178 each carry the N6-acetyllysine; alternate modification. An N6-succinyllysine; alternate mark is found at Lys93 and Lys178. Residues Lys182 and Lys185 each carry the N6-acetyllysine modification.

The protein belongs to the isochorismatase family. In terms of assembly, interacts with CDKN2A. Ubiquitous. Expressed predominantly in uterus, stomach and urinary tract.

The protein resides in the cytoplasm. The protein localises to the nucleus. In Mus musculus (Mouse), this protein is Isochorismatase domain-containing protein 2A.